Reading from the N-terminus, the 403-residue chain is Indoleamine 2,3-dioxygenase 1 (403 aa).

Histidine 346 contacts heme b. Residues 360–381 (QQPKENKTSEDPSKLEAKGTGG) form a disordered region. Residues 363 to 376 (KENKTSEDPSKLEA) are compositionally biased toward basic and acidic residues.

The protein belongs to the indoleamine 2,3-dioxygenase family. In terms of assembly, monomer. Heme b is required as a cofactor. In terms of tissue distribution, expressed in mature dendritic cells located in lymphoid organs (including lymph nodes, spleen, tonsils, Peyers's patches, the gut lamina propria, and the thymic medulla), in some epithelial cells of the female genital tract, as well as in endothelial cells of term placenta and in lung parenchyma. Weakly or not expressed in most normal tissues, but mostly inducible in most tissues. Expressed in more than 50% of tumors, either by tumoral, stromal, or endothelial cells (expression in tumor is associated with a worse clinical outcome). Not overexpressed in tumor-draining lymph nodes.

The protein localises to the cytoplasm. It is found in the cytosol. It catalyses the reaction D-tryptophan + O2 = N-formyl-D-kynurenine. It carries out the reaction L-tryptophan + O2 = N-formyl-L-kynurenine. The protein operates within amino-acid degradation; L-tryptophan degradation via kynurenine pathway; L-kynurenine from L-tryptophan: step 1/2. Its activity is regulated as follows. Activity is inhibited by and MTH-trp (methylthiohydantoin-DL-tryptophan), modestly inhibited by L-1MT (1-methyl-L-tryptophan) but not D-1MT (1-methyl-D-tryptophan). In terms of biological role, catalyzes the first and rate limiting step of the catabolism of the essential amino acid tryptophan along the kynurenine pathway. Involved in the peripheral immune tolerance, contributing to maintain homeostasis by preventing autoimmunity or immunopathology that would result from uncontrolled and overreacting immune responses. Tryptophan shortage inhibits T lymphocytes division and accumulation of tryptophan catabolites induces T-cell apoptosis and differentiation of regulatory T-cells. Acts as a suppressor of anti-tumor immunity. Limits the growth of intracellular pathogens by depriving tryptophan. Protects the fetus from maternal immune rejection. This Homo sapiens (Human) protein is Indoleamine 2,3-dioxygenase 1.